The following is a 206-amino-acid chain: Inner membrane protein YnjF (206 aa).

The Periplasmic segment spans residues 1–37 (MLDRHLHPRIKPLLHQCVRVLDKPGITPDGLTLVGFA). A helical membrane pass occupies residues 38-60 (IGVLALPFLALGWYLAALVVILL). Over 61–79 (NRLLDGLDGALARRRELTD) the chain is Cytoplasmic. The chain crosses the membrane as a helical span at residues 80-102 (AGGFLDISLDFLFYALVPFGFIL). The Periplasmic segment spans residues 103-111 (AAPEQNALA). The helical transmembrane segment at 112–134 (GGWLLFAFIGTGSSFLAFAALAA) threads the bilayer. Residues 135-146 (KHQIDNPGYAHK) lie on the Cytoplasmic side of the membrane. The chain crosses the membrane as a helical span at residues 147–169 (SFYYLGGLTEGTETILLFVLGCL). The Periplasmic portion of the chain corresponds to 170-173 (FPAW). A helical transmembrane segment spans residues 174 to 196 (FAWFAWIFGALCWMTTFTRVWSG). Over 197–206 (YLTLKSLQRQ) the chain is Cytoplasmic.

The protein belongs to the CDP-alcohol phosphatidyltransferase class-I family.

It localises to the cell inner membrane. This is Inner membrane protein YnjF (ynjF) from Escherichia coli (strain K12).